Consider the following 131-residue polypeptide: Small ribosomal subunit protein uS8 (131 aa).

Belongs to the universal ribosomal protein uS8 family. In terms of assembly, part of the 30S ribosomal subunit. Contacts proteins S5 and S12.

One of the primary rRNA binding proteins, it binds directly to 16S rRNA central domain where it helps coordinate assembly of the platform of the 30S subunit. The chain is Small ribosomal subunit protein uS8 from Ralstonia nicotianae (strain ATCC BAA-1114 / GMI1000) (Ralstonia solanacearum).